Reading from the N-terminus, the 158-residue chain is S-ribosylhomocysteine lyase (158 aa).

Residues H55, H59, and C127 each contribute to the Fe cation site.

This sequence belongs to the LuxS family. Homodimer. Requires Fe cation as cofactor.

It carries out the reaction S-(5-deoxy-D-ribos-5-yl)-L-homocysteine = (S)-4,5-dihydroxypentane-2,3-dione + L-homocysteine. Involved in the synthesis of autoinducer 2 (AI-2) which is secreted by bacteria and is used to communicate both the cell density and the metabolic potential of the environment. The regulation of gene expression in response to changes in cell density is called quorum sensing. Catalyzes the transformation of S-ribosylhomocysteine (RHC) to homocysteine (HC) and 4,5-dihydroxy-2,3-pentadione (DPD). The sequence is that of S-ribosylhomocysteine lyase from Geobacillus thermodenitrificans (strain NG80-2).